The following is a 305-amino-acid chain: Flavin-dependent thymidylate synthase (305 aa).

A ThyX domain is found at 50-261 (GFVRLIDYLG…PCATASFENH (212 aa)). FAD is bound by residues Ser96, 119-121 (RHR), and Glu127. DUMP contacts are provided by residues 116–119 (QWMR), 127–131 (EVSSR), and Arg200. The ThyX motif signature appears at 119 to 129 (RHRTARISEVS). FAD is bound by residues 216–218 (DLH) and His222. A dUMP-binding site is contributed by Arg227. The active-site Involved in ionization of N3 of dUMP, leading to its activation is Arg227.

The protein belongs to the thymidylate synthase ThyX family. As to quaternary structure, homotetramer. Requires FAD as cofactor.

It catalyses the reaction dUMP + (6R)-5,10-methylene-5,6,7,8-tetrahydrofolate + NADPH + H(+) = dTMP + (6S)-5,6,7,8-tetrahydrofolate + NADP(+). The protein operates within pyrimidine metabolism; dTTP biosynthesis. In terms of biological role, catalyzes the reductive methylation of 2'-deoxyuridine-5'-monophosphate (dUMP) to 2'-deoxythymidine-5'-monophosphate (dTMP) while utilizing 5,10-methylenetetrahydrofolate (mTHF) as the methyl donor, and NADPH and FADH(2) as the reductant. The chain is Flavin-dependent thymidylate synthase from Treponema pallidum (strain Nichols).